The primary structure comprises 104 residues: U20-lycotoxin-Ls1d (104 aa).

The signal sequence occupies residues Met-1–Ala-30. Residues Gly-31–Ser-76 enclose the WAP domain. Intrachain disulfides connect Cys-34-Cys-64, Cys-42-Cys-68, Cys-51-Cys-63, Cys-52-Cys-90, and Cys-57-Cys-72.

The protein belongs to the venom protein 11 family. 02 (wap-2) subfamily. Contains 5 disulfide bonds. Expressed by the venom gland.

The protein localises to the secreted. Its function is as follows. Has antibacterial activity. This Lycosa singoriensis (Wolf spider) protein is U20-lycotoxin-Ls1d.